Here is a 190-residue protein sequence, read N- to C-terminus: MLLSDRDLRAEISAGRLGIDPFDDSLVQPSSVDVRLDCMFRVFNNTRYTHIDPAQRQDELTSAVEPTKGDPFVLHPGEFVLGSTLEIFSLPGDLAGRLEGKSSLGRLGLLTHSTAGFIDPGFSGHITLELSNVANLPITLWPGMKIGQLCILKLTSPSEHPYGSSGVGSKYQGQRGPTPSRSYQNFIRST.

DCTP contacts are provided by residues 101 to 106, Asp-119, 127 to 129, Gln-148, Tyr-162, and Gln-174; these read KSSLGR and TLE. The active-site Proton donor/acceptor is Glu-129. The disordered stretch occupies residues 161–190; that stretch reads PYGSSGVGSKYQGQRGPTPSRSYQNFIRST. Over residues 171–190 the composition is skewed to polar residues; that stretch reads YQGQRGPTPSRSYQNFIRST.

This sequence belongs to the dCTP deaminase family. As to quaternary structure, homotrimer.

It catalyses the reaction dCTP + 2 H2O = dUMP + NH4(+) + diphosphate. It participates in pyrimidine metabolism; dUMP biosynthesis; dUMP from dCTP: step 1/1. In terms of biological role, bifunctional enzyme that catalyzes both the deamination of dCTP to dUTP and the hydrolysis of dUTP to dUMP without releasing the toxic dUTP intermediate. This Mycobacterium ulcerans (strain Agy99) protein is dCTP deaminase, dUMP-forming.